We begin with the raw amino-acid sequence, 527 residues long: T-complex protein 1 subunit delta (527 aa).

Belongs to the TCP-1 chaperonin family. As to quaternary structure, heterooligomeric complex of about 850 to 900 kDa that forms two stacked rings, 12 to 16 nm in diameter.

The protein localises to the cytoplasm. Molecular chaperone; assists the folding of proteins upon ATP hydrolysis. Known to play a role, in vitro, in the folding of actin and tubulin. In Yarrowia lipolytica (strain CLIB 122 / E 150) (Yeast), this protein is T-complex protein 1 subunit delta (CCT4).